The following is a 532-amino-acid chain: MLLDAGPQFPAIGVGSFARHHHHSAAAAAAAAAEMQDRELSLAAAQNGFVDSAAAHMGAFKLNPGAHELSPGQSSAFTSQGPGAYPGSAAAAAAAAALGPHAAHVGSYSGPPFNSTRDFLFRSRGFGDSAPGGGQHGLFGPGAGGLHHAHSDAQGHLLFPGLPEQHGPHGSQNVLNGQMRLGLPGEVFGRSEQYRQVASPRTDPYSAAQLHNQYGPMNMNMGMNMAAAAAHHHHHHHHHPGAFFRYMRQQCIKQELICKWIDPEQLSNPKKSCNKTFSTMHELVTHVSVEHVGGPEQSNHVCFWEECPREGKPFKAKYKLVNHIRVHTGEKPFPCPFPGCGKVFARSENLKIHKRTHTGEKPFQCEFEGCDRRFANSSDRKKHMHVHTSDKPYLCKMCDKSYTHPSSLRKHMKVHESSPQGSESSPAASSGYESSTPPGLVSPSAEPQSSSNLSPAAAAAAAAAAAAAAAVSAVHRGGGSGSGGAGGGSGGGSGSGGGGGGAGGGGGGSSGGGSGTAGGHSGLSSNFNEWYV.

The tract at residues 100-255 (PHAAHVGSYS…YMRQQCIKQE (156 aa)) is necessary for interaction with MDFIC and transcriptional activation or repression. A phosphoserine mark is found at Ser-191 and Ser-199. Residue Lys-253 forms a Glycyl lysine isopeptide (Lys-Gly) (interchain with G-Cter in SUMO2) linkage. A C2H2-type 1; atypical zinc finger spans residues 256 to 291 (LICKWIDPEQLSNPKKSCNKTFSTMHELVTHVSVEH). A C2H2-type 2; atypical zinc finger spans residues 300 to 327 (HVCFWEECPREGKPFKAKYKLVNHIRVH). C2H2-type zinc fingers lie at residues 333 to 357 (FPCP…KRTH), 363 to 387 (FQCE…MHVH), and 393 to 415 (YLCK…MKVH). Disordered regions lie at residues 406-452 (SSLR…SSSN) and 475-532 (HRGG…EWYV). Residues 417–435 (SSPQGSESSPAASSGYESS) show a composition bias toward low complexity. A compositionally biased stretch (gly residues) spans 476 to 521 (RGGGSGSGGAGGGSGGGSGSGGGGGGAGGGGGGSSGGGSGTAGGHS). Polar residues predominate over residues 523 to 532 (LSSNFNEWYV).

The protein belongs to the GLI C2H2-type zinc-finger protein family. As to quaternary structure, interacts with RNF180. Interacts (via the C2H2-type domains 3, 4 and 5) with MDFIC (via the C2H2-type domains 3, 4 and 5); the interaction reduces its transcriptional activity. Interacts with GLI1 and GLI2. Interacts (via C2H2-type domain 3) with DHX9. Post-translationally, phosphorylated. In terms of processing, ubiquitinated by RNF180, leading to its degradation.

It localises to the nucleus. The protein localises to the cytoplasm. Acts as a transcriptional activator or repressor. Plays important roles in the early stage of organogenesis of the CNS. Activates the transcription of the serotonin transporter SERT in uncrossed ipsilateral retinal ganglion cells (iRGCs) to refine eye-specific projections in primary visual targets. Its transcriptional activity is repressed by MDFIC. Involved in the formation of the ipsilateral retinal projection at the optic chiasm midline. Drives the expression of EPHB1 on ipsilaterally projecting growth cones. Binds to the minimal GLI-consensus sequence 5'-TGGGTGGTC-3'. Associates to the basal SERT promoter region from ventrotemporal retinal segments of retinal embryos. The protein is Zinc finger protein ZIC 2 (ZIC2) of Homo sapiens (Human).